The sequence spans 474 residues: Nitrogenase vanadium-iron protein alpha chain (474 aa).

[8Fe-7S] cluster contacts are provided by Cys-49, Cys-75, and Cys-138. Residues Cys-257 and His-423 each contribute to the [7Fe-V-9S-C-homocitryl] cluster site.

This sequence belongs to the NifD/NifK/NifE/NifN family. As to quaternary structure, hexamer of two alpha, two beta, and two delta chains. [8Fe-7S] cluster serves as cofactor. [7Fe-V-9S-C-homocitryl] cluster is required as a cofactor.

The catalysed reaction is N2 + 8 reduced [2Fe-2S]-[ferredoxin] + 16 ATP + 16 H2O = H2 + 8 oxidized [2Fe-2S]-[ferredoxin] + 2 NH4(+) + 16 ADP + 16 phosphate + 6 H(+). Its function is as follows. This vanadium-iron protein is part of the nitrogenase complex that catalyzes the key enzymatic reactions in nitrogen fixation. The polypeptide is Nitrogenase vanadium-iron protein alpha chain (vnfD) (Azotobacter vinelandii).